Reading from the N-terminus, the 287-residue chain is Urease accessory protein UreD (287 aa).

Belongs to the UreD family. In terms of assembly, ureD, UreF and UreG form a complex that acts as a GTP-hydrolysis-dependent molecular chaperone, activating the urease apoprotein by helping to assemble the nickel containing metallocenter of UreC. The UreE protein probably delivers the nickel.

It localises to the cytoplasm. Required for maturation of urease via the functional incorporation of the urease nickel metallocenter. The sequence is that of Urease accessory protein UreD from Herpetosiphon aurantiacus (strain ATCC 23779 / DSM 785 / 114-95).